Here is an 89-residue protein sequence, read N- to C-terminus: Small ribosomal subunit protein uS15 (89 aa).

The protein belongs to the universal ribosomal protein uS15 family. In terms of assembly, part of the 30S ribosomal subunit. Forms a bridge to the 50S subunit in the 70S ribosome, contacting the 23S rRNA.

One of the primary rRNA binding proteins, it binds directly to 16S rRNA where it helps nucleate assembly of the platform of the 30S subunit by binding and bridging several RNA helices of the 16S rRNA. Functionally, forms an intersubunit bridge (bridge B4) with the 23S rRNA of the 50S subunit in the ribosome. The polypeptide is Small ribosomal subunit protein uS15 (Rhizobium meliloti (strain 1021) (Ensifer meliloti)).